The following is a 2079-amino-acid chain: Protein xmas (2079 aa).

Residues 12–83 (KTLLCRNIPE…HLFDISYADN (72 aa)) enclose the RRM domain. The segment at 112–152 (NEYGSGKPIKKPQNGSSGSGGSSMLPAIPVGPATAPVSRDR) is disordered. The region spanning 342 to 525 (DSKINAENLT…ETEYKLPRQY (184 aa)) is the PCI domain. The sufficient for Orc3 binding stretch occupies residues 835–1359 (PLSFGAENPE…RRDASDHKHA (525 aa)). Disordered stretches follow at residues 1335–1360 (RHTLRELNRSHKSRKRRDASDHKHAM), 1755–1778 (AEETEDQDTHHRHHGGGQKMSKRA), 1930–1963 (KAQAKPRSEPKSPSSATDYHRVASQKLPHVTSKA), and 2032–2079 (SAAA…TGKL). Basic residues predominate over residues 1764–1776 (HHRHHGGGQKMSK). Low complexity predominate over residues 2048-2059 (PVVSPKVQVPSV). A compositionally biased stretch (polar residues) spans 2070–2079 (GPQTTKTGKL).

The protein belongs to the SAC3 family. As to quaternary structure, component of the nuclear pore complex (NPC)-associated TREX-2/AMEX complex (anchoring and mRNA export complex), composed of e(y)2, xmas and PCID2. Within the TREX-2/ AMEX complex, interactions with e(y)2 is required for localization of e(y)2 to the nuclear periphery. Interaction between the TREX-2/AMEX complex and the ORC complex is required for ORC localization to mRNPs, and consequently mRNA export. Within the TREX-2/AMEX-ORC complex, interacts with Orc6, (via C-terminus) with Orc3, and weakly interacts with Orc4. However, another report found that the interaction with Orc3 is not direct, instead it is mediated via e(y)2. Interacts with piwi. As to expression, expressed in ovaries (at protein level). Detected in the testes and ovaries, with expression levels higher in oocytes than in testicular cells (at protein level). In terms of tissue distribution, detected in the testes and ovaries (at protein level). As to expression, detected in the testes.

It localises to the nucleus. Its subcellular location is the nucleoplasm. It is found in the nucleus membrane. The protein resides in the cytoplasm. Functionally, involved in mRNA export and mRNA coupled transcription activation. Component of the nuclear pore complex (NPC)-associated TREX-2/AMEX complex (anchoring and mRNA export complex) which functions in docking export-competent ribonucleoprotein particles (mRNPs) to the nuclear entrance of the nuclear pore complex (nuclear basket), thereby enabling the export of mRNAs to the cytoplasm through the nuclear pores. The TREX-2/AMEX complex also functions with the transcriptional coactivator SAGA/TFTC complex, to anchor a subset of transcription sites to the nuclear pore complex basket in order to achieve efficient transcription and export of their resulting mRNAs. Within the complex, required for localization of e(y)2 to the nuclear periphery. The sequence is that of Protein xmas from Drosophila melanogaster (Fruit fly).